The following is a 282-amino-acid chain: MKLLRYGPPGQEKPGILDADGRIRDLSAHVPDLAGDVLSDAGLARLRALDPATLPLVSGEPRIGACVGRVGKFIGIGLNYADHAAEAGMPVPKEPVVFGKWTSSICGPNDGIDIPKGSVKTDWEVELGVVIGAPCKDVDEARALDYVAGYCVVNDVSEREWQIERGGQWDKGKGFDTFGPIGPWLVTRDEVPDPQSLDLWLEVDGHRYQNGNTRTMVFTVAQLIAYLSSCMTLQPGDVITTGTPPGVGMGIKPAPVYLKAGQMVRLGIEGLGEQLQLTRAAR.

The Mg(2+) site is built by glutamate 124, glutamate 126, and aspartate 155.

It belongs to the FAH family. The cofactor is Mg(2+).

The polypeptide is Putative hydrolase Bmul_3283/BMULJ_05242 (Burkholderia multivorans (strain ATCC 17616 / 249)).